A 240-amino-acid chain; its full sequence is 3-deoxy-D-manno-octulosonic acid kinase (240 aa).

Residue Asp-170 is part of the active site.

Belongs to the protein kinase superfamily. KdkA/RfaP family.

It localises to the cell inner membrane. The enzyme catalyses an alpha-Kdo-(2-&gt;6)-lipid IVA + ATP = a 4-O-phospho-alpha-Kdo-(2-&gt;6)-lipid IVA + ADP + H(+). It participates in bacterial outer membrane biogenesis; LPS core biosynthesis. In terms of biological role, catalyzes the ATP-dependent phosphorylation of the 3-deoxy-D-manno-octulosonic acid (Kdo) residue in Kdo-lipid IV(A) at the 4-OH position. The sequence is that of 3-deoxy-D-manno-octulosonic acid kinase from Mannheimia succiniciproducens (strain KCTC 0769BP / MBEL55E).